Here is a 452-residue protein sequence, read N- to C-terminus: UDP-N-acetylmuramoyl-tripeptide--D-alanyl-D-alanine ligase (452 aa).

Position 113–119 (113–119 (GSNGKTT)) interacts with ATP.

It belongs to the MurCDEF family. MurF subfamily.

The protein localises to the cytoplasm. It carries out the reaction UDP-N-acetyl-alpha-D-muramoyl-L-alanyl-gamma-D-glutamyl-L-lysine + D-alanyl-D-alanine + ATP = UDP-N-acetyl-alpha-D-muramoyl-L-alanyl-gamma-D-glutamyl-L-lysyl-D-alanyl-D-alanine + ADP + phosphate + H(+). It functions in the pathway cell wall biogenesis; peptidoglycan biosynthesis. Involved in cell wall formation. Catalyzes the final step in the synthesis of UDP-N-acetylmuramoyl-pentapeptide, the precursor of murein. Catalyzes the addition of D-alanyl-D-alanine to UDP-MurNAc-L-alanyl-gamma-D-glutamyl-L-lysine. In vitro, can also use the mesodiaminopimelic acid-containing form of UDP-MurNAc-tripeptide, with the same efficiency, revealing that the discrimination for the amino acid residue at the third position of the peptide in the peptidoglycans is entirely supported by MurE. This is UDP-N-acetylmuramoyl-tripeptide--D-alanyl-D-alanine ligase from Staphylococcus aureus (strain NCTC 8325 / PS 47).